Here is a 130-residue protein sequence, read N- to C-terminus: Fluoride-specific ion channel FluC (130 aa).

4 consecutive transmembrane segments (helical) span residues 2 to 22, 35 to 55, 72 to 92, and 107 to 127; these read GLLL…RFAL, IGIL…AAFL, LFVT…LDIL, and ILVS…FIMG. Gly79 and Thr82 together coordinate Na(+).

The protein belongs to the fluoride channel Fluc/FEX (TC 1.A.43) family.

Its subcellular location is the cell inner membrane. It catalyses the reaction fluoride(in) = fluoride(out). Na(+) is not transported, but it plays an essential structural role and its presence is essential for fluoride channel function. Fluoride-specific ion channel. Important for reducing fluoride concentration in the cell, thus reducing its toxicity. The chain is Fluoride-specific ion channel FluC from Francisella philomiragia subsp. philomiragia (strain ATCC 25017 / CCUG 19701 / FSC 153 / O#319-036).